Here is a 66-residue protein sequence, read N- to C-terminus: MNAQELRNKTPDQLREDLVTLKKEAFNLRFQQATGQLENNARIRTVRRDVARVMTVLNEKAAEAAN.

It belongs to the universal ribosomal protein uL29 family.

This chain is Large ribosomal subunit protein uL29, found in Ruegeria pomeroyi (strain ATCC 700808 / DSM 15171 / DSS-3) (Silicibacter pomeroyi).